Consider the following 118-residue polypeptide: Ribosome-binding factor A (118 aa).

Belongs to the RbfA family. As to quaternary structure, monomer. Binds 30S ribosomal subunits, but not 50S ribosomal subunits or 70S ribosomes.

The protein localises to the cytoplasm. Functionally, one of several proteins that assist in the late maturation steps of the functional core of the 30S ribosomal subunit. Associates with free 30S ribosomal subunits (but not with 30S subunits that are part of 70S ribosomes or polysomes). Required for efficient processing of 16S rRNA. May interact with the 5'-terminal helix region of 16S rRNA. The sequence is that of Ribosome-binding factor A from Dehalococcoides mccartyi (strain ATCC BAA-2266 / KCTC 15142 / 195) (Dehalococcoides ethenogenes (strain 195)).